Consider the following 520-residue polypeptide: Probable glycerol-3-phosphate acyltransferase 3 (520 aa).

5 helical membrane-spanning segments follow: residues 5–20, 64–84, 88–108, 264–284, and 286–306; these read ISIF…RFIL, YFML…LFIL, ISLM…FFGI, TLMN…AAAA, and LFVS…FSGC. An HXXXXD motif motif is present at residues 334 to 339; the sequence is HRTLLD.

It belongs to the GPAT/DAPAT family. In terms of tissue distribution, widely expressed at low level. Expressed at higher level in seedlings and leaves.

The protein resides in the membrane. It carries out the reaction sn-glycerol 3-phosphate + an acyl-CoA = a 1-acyl-sn-glycero-3-phosphate + CoA. The protein operates within phospholipid metabolism; CDP-diacylglycerol biosynthesis; CDP-diacylglycerol from sn-glycerol 3-phosphate: step 1/3. Functionally, esterifies acyl-group from acyl-ACP to the sn-1 position of glycerol-3-phosphate, an essential step in glycerolipid biosynthesis. This Arabidopsis thaliana (Mouse-ear cress) protein is Probable glycerol-3-phosphate acyltransferase 3 (GPAT3).